Consider the following 387-residue polypeptide: Lymphocyte transmembrane adapter 1 (387 aa).

Over 1-37 (MDVTTSAWSETTRRISEPSTLQGTLGSLDKAEDHSSS) the chain is Extracellular. A helical; Signal-anchor for type III membrane protein transmembrane segment spans residues 38–58 (IFSGFAALLAILLVVAVICVL). At 59–387 (WCCGKRKKRQ…VCAAEAGARG (329 aa)) the chain is on the cytoplasmic side. The interval 114 to 136 (VSTESLLSRNSDSPSSEHVPSRA) is disordered. A compositionally biased stretch (low complexity) spans 118–129 (SLLSRNSDSPSS). At Y195 the chain carries Phosphotyrosine. The tract at residues 230-268 (SEEIDEGCGNASDCTSLGSPGTENSDPLSDGEGSSQTSN) is disordered. The segment covering 241-268 (SDCTSLGSPGTENSDPLSDGEGSSQTSN) has biased composition (polar residues). Y270 and Y296 each carry phosphotyrosine. Residues 294–387 (RDYENVPPGP…VCAAEAGARG (94 aa)) are disordered. Over residues 319-329 (DHVEGRTDGPE) the composition is skewed to basic and acidic residues. Over residues 360–369 (PWEDAEETSS) the composition is skewed to acidic residues. Y375 bears the Phosphotyrosine mark.

In terms of assembly, when phosphorylated, interacts with GRB2, PIK3R1 and GRAP2. In terms of processing, phosphorylated on tyrosines upon TCR or BCR activation; which leads to the recruitment of GRB2, PIK3R1 and GRAP2.

The protein resides in the cell membrane. Negatively regulates TCR (T-cell antigen receptor)-mediated signaling in T-cells and BCR (B-cell antigen receptor)-mediated signaling in B-cells. The chain is Lymphocyte transmembrane adapter 1 (LAX1) from Bos taurus (Bovine).